We begin with the raw amino-acid sequence, 450 residues long: D-inositol 3-phosphate glycosyltransferase (450 aa).

Histidine 21 lines the 1D-myo-inositol 3-phosphate pocket. UDP-N-acetyl-alpha-D-glucosamine is bound by residues 27–28 and glycine 35; that span reads QP. Residues 32-37, lysine 90, tyrosine 123, threonine 147, and arginine 167 each bind 1D-myo-inositol 3-phosphate; that span reads DAGGMN. The UDP-N-acetyl-alpha-D-glucosamine site is built by arginine 241, lysine 246, and valine 307. The Mg(2+) site is built by tyrosine 316, arginine 317, and alanine 319. UDP-N-acetyl-alpha-D-glucosamine contacts are provided by glutamate 329 and glutamate 337. Threonine 343 serves as a coordination point for Mg(2+).

It belongs to the glycosyltransferase group 1 family. MshA subfamily. Homodimer.

It catalyses the reaction 1D-myo-inositol 3-phosphate + UDP-N-acetyl-alpha-D-glucosamine = 1D-myo-inositol 2-acetamido-2-deoxy-alpha-D-glucopyranoside 3-phosphate + UDP + H(+). In terms of biological role, catalyzes the transfer of a N-acetyl-glucosamine moiety to 1D-myo-inositol 3-phosphate to produce 1D-myo-inositol 2-acetamido-2-deoxy-glucopyranoside 3-phosphate in the mycothiol biosynthesis pathway. This is D-inositol 3-phosphate glycosyltransferase from Geodermatophilus obscurus (strain ATCC 25078 / DSM 43160 / JCM 3152 / CCUG 61914 / KCC A-0152 / KCTC 9177 / NBRC 13315 / NRRL B-3577 / G-20).